Consider the following 232-residue polypeptide: uncharacterized protein (232 aa).

Residues 10–32 (GLTIYLYPVIAWIILVTKIESGL) form a helical membrane-spanning segment.

The protein localises to the membrane. This is an uncharacterized protein from Archaeoglobus fulgidus (strain ATCC 49558 / DSM 4304 / JCM 9628 / NBRC 100126 / VC-16).